Reading from the N-terminus, the 230-residue chain is MKIGIIGAMEPEVAHLVESMENSTSTTIAGIEFVAGQLAGQEVIVTRSGIGKVTASIATTLLIEKYAPDAIINTGSAGGFADDLAIGDIVISSEVRHHDVDVTAFGYEIGQMAQQPAAFLPDAKLVAAAQKAVASLGEVKAIEGLICTGDSFICDPVRTKTMLENFPTMAACEMEAAAIAQVCHQFAVPFVVIRSLSDNANDDSAVDFDEYIIKAGLHSALMVIALIKQL.

Catalysis depends on glutamate 12, which acts as the Proton acceptor. Residues glycine 78, isoleucine 153, and 174–175 (ME) each bind substrate. Aspartate 198 (proton donor) is an active-site residue.

This sequence belongs to the PNP/UDP phosphorylase family. MtnN subfamily.

The enzyme catalyses S-adenosyl-L-homocysteine + H2O = S-(5-deoxy-D-ribos-5-yl)-L-homocysteine + adenine. The catalysed reaction is S-methyl-5'-thioadenosine + H2O = 5-(methylsulfanyl)-D-ribose + adenine. It carries out the reaction 5'-deoxyadenosine + H2O = 5-deoxy-D-ribose + adenine. Its pathway is amino-acid biosynthesis; L-methionine biosynthesis via salvage pathway; S-methyl-5-thio-alpha-D-ribose 1-phosphate from S-methyl-5'-thioadenosine (hydrolase route): step 1/2. Functionally, catalyzes the irreversible cleavage of the glycosidic bond in both 5'-methylthioadenosine (MTA) and S-adenosylhomocysteine (SAH/AdoHcy) to adenine and the corresponding thioribose, 5'-methylthioribose and S-ribosylhomocysteine, respectively. Also cleaves 5'-deoxyadenosine, a toxic by-product of radical S-adenosylmethionine (SAM) enzymes, into 5-deoxyribose and adenine. This chain is 5'-methylthioadenosine/S-adenosylhomocysteine nucleosidase, found in Shewanella piezotolerans (strain WP3 / JCM 13877).